We begin with the raw amino-acid sequence, 914 residues long: High affinity cAMP-specific and IBMX-insensitive 3',5'-cyclic phosphodiesterase 8 (914 aa).

Disordered regions lie at residues 1–27 (MGCSPSTLPPAPSAGQTGERGSLPLDA) and 113–138 (RRATGSTGTSGTSSSGGNSRPGHRKS). Residues 116-129 (TGSTGTSGTSSSGG) are compositionally biased toward low complexity. The region spanning 312 to 359 (TQQALYTALHRLKEVVLITDDLLRIQYANRATERLLNMRLDEIISKQL) is the PAS domain. Residues 558-893 (TAAIVPAKMK…SQWKKYDEQG (336 aa)) form the PDEase domain. The active-site Proton donor is His640. A divalent metal cation-binding residues include His644, His682, Asp683, and Asp799.

Belongs to the cyclic nucleotide phosphodiesterase family. PDE8 subfamily. A divalent metal cation serves as cofactor. Expressed in Malpighian tubules and head.

The catalysed reaction is 3',5'-cyclic AMP + H2O = AMP + H(+). It participates in purine metabolism; 3',5'-cyclic AMP degradation; AMP from 3',5'-cyclic AMP: step 1/1. In terms of biological role, hydrolyzes the second messenger cAMP, which is a key regulator of many important physiological processes. Involved in the positive regulation of MAP kinase signaling and in inhibiting oxidative stress-induced cell death. This Drosophila melanogaster (Fruit fly) protein is High affinity cAMP-specific and IBMX-insensitive 3',5'-cyclic phosphodiesterase 8.